A 342-amino-acid chain; its full sequence is Holliday junction branch migration complex subunit RuvB (342 aa).

A disordered region spans residues 1-21 (MSVEHSPVDPSAEPPEKAEEA). A large ATPase domain (RuvB-L) region spans residues 1–184 (MSVEHSPVDP…FGFTAQLDYY (184 aa)). Residues L23, R24, G65, K68, T69, T70, 131–133 (EDF), R174, Y184, and R221 each bind ATP. T69 serves as a coordination point for Mg(2+). A small ATPAse domain (RuvB-S) region spans residues 185–255 (EVADLERIVT…GAETALDLYE (71 aa)). The interval 258 to 342 (PLGLDRLDRA…PPDSSGEGLF (85 aa)) is head domain (RuvB-H). R313 and R318 together coordinate DNA.

The protein belongs to the RuvB family. Homohexamer. Forms an RuvA(8)-RuvB(12)-Holliday junction (HJ) complex. HJ DNA is sandwiched between 2 RuvA tetramers; dsDNA enters through RuvA and exits via RuvB. An RuvB hexamer assembles on each DNA strand where it exits the tetramer. Each RuvB hexamer is contacted by two RuvA subunits (via domain III) on 2 adjacent RuvB subunits; this complex drives branch migration. In the full resolvosome a probable DNA-RuvA(4)-RuvB(12)-RuvC(2) complex forms which resolves the HJ.

Its subcellular location is the cytoplasm. The enzyme catalyses ATP + H2O = ADP + phosphate + H(+). In terms of biological role, the RuvA-RuvB-RuvC complex processes Holliday junction (HJ) DNA during genetic recombination and DNA repair, while the RuvA-RuvB complex plays an important role in the rescue of blocked DNA replication forks via replication fork reversal (RFR). RuvA specifically binds to HJ cruciform DNA, conferring on it an open structure. The RuvB hexamer acts as an ATP-dependent pump, pulling dsDNA into and through the RuvAB complex. RuvB forms 2 homohexamers on either side of HJ DNA bound by 1 or 2 RuvA tetramers; 4 subunits per hexamer contact DNA at a time. Coordinated motions by a converter formed by DNA-disengaged RuvB subunits stimulates ATP hydrolysis and nucleotide exchange. Immobilization of the converter enables RuvB to convert the ATP-contained energy into a lever motion, pulling 2 nucleotides of DNA out of the RuvA tetramer per ATP hydrolyzed, thus driving DNA branch migration. The RuvB motors rotate together with the DNA substrate, which together with the progressing nucleotide cycle form the mechanistic basis for DNA recombination by continuous HJ branch migration. Branch migration allows RuvC to scan DNA until it finds its consensus sequence, where it cleaves and resolves cruciform DNA. The sequence is that of Holliday junction branch migration complex subunit RuvB from Cutibacterium acnes (strain DSM 16379 / KPA171202) (Propionibacterium acnes).